We begin with the raw amino-acid sequence, 186 residues long: Dynactin subunit 3 (186 aa).

The residue at position 2 (alanine 2) is an N-acetylalanine. The stretch at 46-66 (NIASKRERVKILYKKIEDLIK) forms a coiled coil.

The protein belongs to the dynactin subunit 3 family. As to quaternary structure, subunit of dynactin, a multiprotein complex part of a tripartite complex with dynein and a adapter, such as BICDL1, BICD2 or HOOK3. The dynactin complex is built around ACTR1A/ACTB filament and consists of an actin-related filament composed of a shoulder domain, a pointed end and a barbed end. Its length is defined by its flexible shoulder domain. The soulder is composed of 2 DCTN1 subunits, 4 DCTN2 and 2 DCTN3. The 4 DCNT2 (via N-terminus) bind the ACTR1A filament and act as molecular rulers to determine the length. The pointed end is important for binding dynein-dynactin cargo adapters. Consists of 4 subunits: ACTR10, DCNT4, DCTN5 and DCTN6. The barbed end is composed of a CAPZA1:CAPZB heterodimers, which binds ACTR1A/ACTB filament and dynactin and stabilizes dynactin.

The protein resides in the cytoplasm. Its subcellular location is the cytoskeleton. It is found in the microtubule organizing center. It localises to the centrosome. The protein localises to the chromosome. The protein resides in the centromere. Its subcellular location is the kinetochore. It is found in the spindle. It localises to the cleavage furrow. The protein localises to the midbody. Functionally, part of the dynactin complex that activates the molecular motor dynein for ultra-processive transport along microtubules. Together with dynein may be involved in spindle assembly and cytokinesis. The sequence is that of Dynactin subunit 3 from Mus musculus (Mouse).